We begin with the raw amino-acid sequence, 134 residues long: uncharacterized protein (134 aa).

Helical transmembrane passes span 5–25 (FGIF…FGGF), 30–50 (LILL…ETII), and 62–82 (LVKK…DQLL).

It belongs to the bacteriophage holin family. Cp-1 holin subfamily.

It is found in the cell membrane. This is an uncharacterized protein from Bacillus subtilis (strain 168).